The sequence spans 293 residues: Small ribosomal subunit protein uS2m (293 aa).

Residues 21-38 are compositionally biased toward low complexity; sequence GRAAQRGRTLGSAAAAAA. Disordered stretches follow at residues 21–49 and 263–293; these read GRAA…DRSA and QGAP…GHSP. Basic and acidic residues predominate over residues 39 to 49; sequence REPERDSDRSA. Pro residues predominate over residues 267–279; that stretch reads GPHPANPAAPGAP.

It belongs to the universal ribosomal protein uS2 family. Component of the mitochondrial ribosome small subunit (28S) which comprises a 12S rRNA and about 30 distinct proteins.

It localises to the mitochondrion. Required for mitoribosome formation and stability, and mitochondrial translation. This Bos taurus (Bovine) protein is Small ribosomal subunit protein uS2m (MRPS2).